Reading from the N-terminus, the 1073-residue chain is Carbamoyl phosphate synthase large chain (1073 aa).

A carboxyphosphate synthetic domain region spans residues 2–403; the sequence is PKRTDIKSIL…SLQKALRGLE (402 aa). Arg-129, Arg-169, Gly-175, Gly-176, Glu-208, Leu-210, Glu-215, Gly-241, Ile-242, His-243, Gln-285, and Glu-299 together coordinate ATP. Residues 133–328 enclose the ATP-grasp 1 domain; it reads DVAMKKIGLE…IAKVAAKLAV (196 aa). Positions 285, 299, and 301 each coordinate Mg(2+). 3 residues coordinate Mn(2+): Gln-285, Glu-299, and Asn-301. Residues 404-553 form an oligomerization domain region; sequence VGATGFDPKV…YSTYEEECEA (150 aa). Residues 554 to 936 are carbamoyl phosphate synthetic domain; sequence NPSTDREKIM…AFAKAQLGSN (383 aa). Residues 679–870 form the ATP-grasp 2 domain; it reads QHAVERLKLK…LAKVAARVMA (192 aa). Residues Arg-715, His-754, Leu-756, Glu-761, Gly-786, Val-787, His-788, Ser-789, Gln-829, and Glu-841 each coordinate ATP. Gln-829, Glu-841, and Asn-843 together coordinate Mg(2+). Mn(2+) is bound by residues Gln-829, Glu-841, and Asn-843. The region spanning 937-1073 is the MGS-like domain; it reads STMKKHGRAL…SVQEMHAQIK (137 aa). The allosteric domain stretch occupies residues 937-1073; the sequence is STMKKHGRAL…SVQEMHAQIK (137 aa).

This sequence belongs to the CarB family. Composed of two chains; the small (or glutamine) chain promotes the hydrolysis of glutamine to ammonia, which is used by the large (or ammonia) chain to synthesize carbamoyl phosphate. Tetramer of heterodimers (alpha,beta)4. Mg(2+) is required as a cofactor. Requires Mn(2+) as cofactor.

It carries out the reaction hydrogencarbonate + L-glutamine + 2 ATP + H2O = carbamoyl phosphate + L-glutamate + 2 ADP + phosphate + 2 H(+). The catalysed reaction is hydrogencarbonate + NH4(+) + 2 ATP = carbamoyl phosphate + 2 ADP + phosphate + 2 H(+). It participates in amino-acid biosynthesis; L-arginine biosynthesis; carbamoyl phosphate from bicarbonate: step 1/1. It functions in the pathway pyrimidine metabolism; UMP biosynthesis via de novo pathway; (S)-dihydroorotate from bicarbonate: step 1/3. Functionally, large subunit of the glutamine-dependent carbamoyl phosphate synthetase (CPSase). CPSase catalyzes the formation of carbamoyl phosphate from the ammonia moiety of glutamine, carbonate, and phosphate donated by ATP, constituting the first step of 2 biosynthetic pathways, one leading to arginine and/or urea and the other to pyrimidine nucleotides. The large subunit (synthetase) binds the substrates ammonia (free or transferred from glutamine from the small subunit), hydrogencarbonate and ATP and carries out an ATP-coupled ligase reaction, activating hydrogencarbonate by forming carboxy phosphate which reacts with ammonia to form carbamoyl phosphate. The sequence is that of Carbamoyl phosphate synthase large chain from Escherichia coli O6:H1 (strain CFT073 / ATCC 700928 / UPEC).